The primary structure comprises 102 residues: Small ribosomal subunit protein uS10 (102 aa).

This sequence belongs to the universal ribosomal protein uS10 family. As to quaternary structure, part of the 30S ribosomal subunit.

Involved in the binding of tRNA to the ribosomes. The sequence is that of Small ribosomal subunit protein uS10 from Akkermansia muciniphila (strain ATCC BAA-835 / DSM 22959 / JCM 33894 / BCRC 81048 / CCUG 64013 / CIP 107961 / Muc).